We begin with the raw amino-acid sequence, 157 residues long: Increased recombination centers protein 23 (157 aa).

Topologically, residues 1–6 are cytoplasmic; that stretch reads MIEALE. Residues 7–29 traverse the membrane as a helical segment; sequence IVLLLVIQSLQYICRTCIAFLLI. Residues 30 to 33 are Lumenal-facing; that stretch reads PFLG. The chain crosses the membrane as a helical span at residues 34 to 56; that stretch reads LYAFDLFLYVYRMILYLSQMFNY. Over 57–157 the chain is Cytoplasmic; that stretch reads KRKLGRSKTN…EEGYYIAGSI (101 aa).

The protein localises to the endoplasmic reticulum membrane. Its function is as follows. Is probably involved in a pathway contributing to genomic integrity. This chain is Increased recombination centers protein 23 (IRC23), found in Saccharomyces cerevisiae (strain ATCC 204508 / S288c) (Baker's yeast).